The primary structure comprises 655 residues: MEHSGPSEVTGADTAGPDPQLAVTMGFTGFGKKARTFDLEAMFEQTRRTAVERSRKTLEAREKEEEMNREKELRKQLEDIEPTPSSSSAVRERSKSSSRDTSSSDSDHSSGSSDDELIGPPLPPEMVGGPVNTVDEDILGPLPPPLCEEGEDDDDDDLEDEGEEDNPIHRIPDSHEITLKHGTKTVSALGLDPSGARLVTGGYDYDVKFWDFAGMDASFKAFRSLQPCECHQIKSLQYSNTGDMILVVSGSSQAKVIDRDGFEVMECIKGDQYIVDMANTKGHTAMLHTGSWHPKIKGEFMTCSNDATVRLWEVENPKKQKSVFKPRTMQGKKVIPTTCTYSRDGNLVAAACQNGSIQIWDRNLTVHPKFHYKQAHAPGTDTSCVAFSYDGNVLASRGGDDTLKLWDVRQFNKPLFSASDLPTLFPMTDCCFSPDDKLIVTGTSVQRGCGSGKLVFFERRTFQRVYEIHITDASVVRCLWHPKLNQIMVGTGNGLAKVYYDPNKSQRGAKLCVVKTQRKAKQAETLTQDYIITPHALPMFREPRQRSTRKQLEKDRLDPLKSHKPEPPVAGPGRGGRVGTHGGTLSSYIVKNIALDKTDDSNPREAILRHAKAAEDNPYWVSPAYSKTQPKTMFAQVESDDEESKNEPEWKKRKI.

Disordered regions lie at residues 1-24 (MEHSGPSEVTGADTAGPDPQLAVT) and 43-170 (FEQT…PIHR). Residues 45 to 78 (QTRRTAVERSRKTLEAREKEEEMNREKELRKQLE) are compositionally biased toward basic and acidic residues. The span at 99 to 112 (RDTSSSDSDHSSGS) shows a compositional bias: low complexity. Residues 148 to 165 (EEGEDDDDDDLEDEGEED) are compositionally biased toward acidic residues. 7 WD repeats span residues 181–220 (HGTKTVSALGLDPSGARLVTGGYDYDVKFWDFAGMDASFK), 228–269 (CECH…ECIK), 282–322 (GHTA…KQKS), 331–370 (GKKVIPTTCTYSRDGNLVAAACQNGSIQIWDRNLTVHPKF), 377–416 (APGTDTSCVAFSYDGNVLASRGGDDTLKLWDVRQFNKPLF), 422–467 (PTLF…RVYE), and 470–509 (ITDASVVRCLWHPKLNQIMVGTGNGLAKVYYDPNKSQRGA). Lysine 297 participates in a covalent cross-link: Glycyl lysine isopeptide (Lys-Gly) (interchain with G-Cter in SUMO2). The residue at position 453 (lysine 453) is an N6-acetyllysine. The segment covering 541–566 (REPRQRSTRKQLEKDRLDPLKSHKPE) has biased composition (basic and acidic residues). The interval 541–582 (REPRQRSTRKQLEKDRLDPLKSHKPEPPVAGPGRGGRVGTHG) is disordered. Residues 572–582 (PGRGGRVGTHG) are compositionally biased toward gly residues. Phosphothreonine is present on threonine 580. Residues lysine 591 and lysine 597 each participate in a glycyl lysine isopeptide (Lys-Gly) (interchain with G-Cter in SUMO2) cross-link. A phosphoserine mark is found at serine 622 and serine 639. A disordered region spans residues 632-655 (TMFAQVESDDEESKNEPEWKKRKI). The segment covering 645-655 (KNEPEWKKRKI) has biased composition (basic and acidic residues).

Belongs to the WD repeat GAD-1 family.

The polypeptide is WD repeat-containing protein 70 (Wdr70) (Rattus norvegicus (Rat)).